We begin with the raw amino-acid sequence, 148 residues long: Small ribosomal subunit protein bS6 (148 aa).

Residues 97-148 (EEGPSAMLQRRDDRERGDRGDRGPRRDFDDRGPRRPREDDRPRRSREDEGDE) are disordered.

It belongs to the bacterial ribosomal protein bS6 family.

In terms of biological role, binds together with bS18 to 16S ribosomal RNA. The sequence is that of Small ribosomal subunit protein bS6 from Chelativorans sp. (strain BNC1).